Consider the following 150-residue polypeptide: Arginine repressor (150 aa).

The protein belongs to the ArgR family.

The protein resides in the cytoplasm. It functions in the pathway amino-acid biosynthesis; L-arginine biosynthesis [regulation]. Functionally, regulates arginine biosynthesis genes. This chain is Arginine repressor, found in Clostridium botulinum (strain 657 / Type Ba4).